Reading from the N-terminus, the 484-residue chain is Threonine synthase-like 2 (484 aa).

The residue at position 113 (K113) is an N6-(pyridoxal phosphate)lysine.

The protein belongs to the threonine synthase family. Requires pyridoxal 5'-phosphate as cofactor.

The protein localises to the secreted. Functionally, acts as a catabolic phospho-lyase on both gamma- and beta-phosphorylated substrates. Degrades O-phospho-threonine (PThr) to alpha-ketobutyrate, ammonia and phosphate. Its function is as follows. Potent inducer of osteoblastic production of IL6. May act to exacerbate inflammation and/or bone turnover under inflammatory conditions. The chain is Threonine synthase-like 2 (THNSL2) from Homo sapiens (Human).